The primary structure comprises 442 residues: tRNA-2-methylthio-N(6)-dimethylallyladenosine synthase (442 aa).

In terms of domain architecture, MTTase N-terminal spans 5-122 (KKVFIKTLGC…LPEMIKQKQK (118 aa)). Positions 14, 51, 85, 159, 163, and 166 each coordinate [4Fe-4S] cluster. Residues 145–378 (KAEGAKAYVS…DLLNSNAQII (234 aa)) form the Radical SAM core domain. One can recognise a TRAM domain in the interval 380 to 442 (RQMVGTNQRI…LPNSLRGELI (63 aa)).

It belongs to the methylthiotransferase family. MiaB subfamily. In terms of assembly, monomer. It depends on [4Fe-4S] cluster as a cofactor.

It localises to the cytoplasm. The catalysed reaction is N(6)-dimethylallyladenosine(37) in tRNA + (sulfur carrier)-SH + AH2 + 2 S-adenosyl-L-methionine = 2-methylsulfanyl-N(6)-dimethylallyladenosine(37) in tRNA + (sulfur carrier)-H + 5'-deoxyadenosine + L-methionine + A + S-adenosyl-L-homocysteine + 2 H(+). In terms of biological role, catalyzes the methylthiolation of N6-(dimethylallyl)adenosine (i(6)A), leading to the formation of 2-methylthio-N6-(dimethylallyl)adenosine (ms(2)i(6)A) at position 37 in tRNAs that read codons beginning with uridine. This Francisella tularensis subsp. holarctica (strain FTNF002-00 / FTA) protein is tRNA-2-methylthio-N(6)-dimethylallyladenosine synthase.